Reading from the N-terminus, the 245-residue chain is UDP-2,3-diacylglucosamine hydrolase (245 aa).

The Mn(2+) site is built by aspartate 8, histidine 10, aspartate 41, asparagine 79, and histidine 114. A substrate-binding site is contributed by 79 to 80; that stretch reads NR. Residues aspartate 122, serine 160, lysine 164, lysine 167, and histidine 195 each contribute to the substrate site. Histidine 195 and histidine 197 together coordinate Mn(2+).

This sequence belongs to the LpxH family. Mn(2+) serves as cofactor.

It localises to the cell inner membrane. It catalyses the reaction UDP-2-N,3-O-bis[(3R)-3-hydroxytetradecanoyl]-alpha-D-glucosamine + H2O = 2-N,3-O-bis[(3R)-3-hydroxytetradecanoyl]-alpha-D-glucosaminyl 1-phosphate + UMP + 2 H(+). It participates in glycolipid biosynthesis; lipid IV(A) biosynthesis; lipid IV(A) from (3R)-3-hydroxytetradecanoyl-[acyl-carrier-protein] and UDP-N-acetyl-alpha-D-glucosamine: step 4/6. Hydrolyzes the pyrophosphate bond of UDP-2,3-diacylglucosamine to yield 2,3-diacylglucosamine 1-phosphate (lipid X) and UMP by catalyzing the attack of water at the alpha-P atom. Involved in the biosynthesis of lipid A, a phosphorylated glycolipid that anchors the lipopolysaccharide to the outer membrane of the cell. This chain is UDP-2,3-diacylglucosamine hydrolase, found in Aromatoleum aromaticum (strain DSM 19018 / LMG 30748 / EbN1) (Azoarcus sp. (strain EbN1)).